The chain runs to 300 residues: Tyrosine recombinase XerC (300 aa).

Residues 2-88 (IQEGKLEQQF…SLRSFYTFLL (87 aa)) form the Core-binding (CB) domain. A Tyr recombinase domain is found at 109–294 (RLPKFFYSEE…TKEHLKSTYM (186 aa)). Residues arginine 150, lysine 174, histidine 246, arginine 249, and histidine 272 contribute to the active site. Tyrosine 281 (O-(3'-phospho-DNA)-tyrosine intermediate) is an active-site residue.

Belongs to the 'phage' integrase family. XerC subfamily. In terms of assembly, forms a cyclic heterotetrameric complex composed of two molecules of XerC and two molecules of XerD.

It localises to the cytoplasm. Site-specific tyrosine recombinase, which acts by catalyzing the cutting and rejoining of the recombining DNA molecules. The XerC-XerD complex is essential to convert dimers of the bacterial chromosome into monomers to permit their segregation at cell division. It also contributes to the segregational stability of plasmids. This chain is Tyrosine recombinase XerC, found in Listeria monocytogenes serotype 4b (strain F2365).